Here is a 367-residue protein sequence, read N- to C-terminus: MHFTIQREALLKPLQLVAGVVERRQTLPVLSNVLLVVQGQQLSLTGTDLEVELVGRVQLEEPAEPGEITVPARKLMDICKSLPNDALIDIKVDEQKLLVKAGRSRFTLSTLPANDFPTVEEGPGSLTCNLEQSKLRRLIERTSFAMAQQDVRYYLNGMLLEVSRNTLRAVSTDGHRLALCSMSAPIEQEDRHQVIVPRKGILELARLLTDPEGMVSIVLGQHHIRATTGEFTFTSKLVDGKFPDYERVLPKGGDKLVVGDRQALREAFSRTAILSNEKYRGIRLQLAAGQLKIQANNPEQEEAEEEISVDYEGSSLEIGFNVSYLLDVLGVMTTEQVRLILSDSNSSALLQEAGNDDSSYVVMPMRL.

The protein belongs to the beta sliding clamp family. Forms a ring-shaped head-to-tail homodimer around DNA which binds and tethers DNA polymerases and other proteins to the DNA. The DNA replisome complex has a single clamp-loading complex (3 tau and 1 each of delta, delta', psi and chi subunits) which binds 3 Pol III cores (1 core on the leading strand and 2 on the lagging strand) each with a beta sliding clamp dimer. Additional proteins in the replisome are other copies of gamma, psi and chi, Ssb, DNA helicase and RNA primase.

The protein resides in the cytoplasm. Functionally, confers DNA tethering and processivity to DNA polymerases and other proteins. Acts as a clamp, forming a ring around DNA (a reaction catalyzed by the clamp-loading complex) which diffuses in an ATP-independent manner freely and bidirectionally along dsDNA. Initially characterized for its ability to contact the catalytic subunit of DNA polymerase III (Pol III), a complex, multichain enzyme responsible for most of the replicative synthesis in bacteria; Pol III exhibits 3'-5' exonuclease proofreading activity. The beta chain is required for initiation of replication as well as for processivity of DNA replication. This chain is Beta sliding clamp (dnaN), found in Pseudomonas putida (strain ATCC 47054 / DSM 6125 / CFBP 8728 / NCIMB 11950 / KT2440).